The primary structure comprises 105 residues: Large ribosomal subunit protein uL24 (105 aa).

It belongs to the universal ribosomal protein uL24 family. As to quaternary structure, part of the 50S ribosomal subunit.

Functionally, one of two assembly initiator proteins, it binds directly to the 5'-end of the 23S rRNA, where it nucleates assembly of the 50S subunit. One of the proteins that surrounds the polypeptide exit tunnel on the outside of the subunit. This Methylobacterium sp. (strain 4-46) protein is Large ribosomal subunit protein uL24.